The sequence spans 464 residues: UDP-N-acetylmuramate--L-alanine ligase (464 aa).

115 to 121 (GSHGKTT) lines the ATP pocket.

Belongs to the MurCDEF family.

It is found in the cytoplasm. The catalysed reaction is UDP-N-acetyl-alpha-D-muramate + L-alanine + ATP = UDP-N-acetyl-alpha-D-muramoyl-L-alanine + ADP + phosphate + H(+). The protein operates within cell wall biogenesis; peptidoglycan biosynthesis. Functionally, cell wall formation. The protein is UDP-N-acetylmuramate--L-alanine ligase of Pelagibacter ubique (strain HTCC1062).